Consider the following 293-residue polypeptide: Acetyl-coenzyme A carboxylase carboxyl transferase subunit beta (293 aa).

The 265-residue stretch at 29-293 (LWVKCSECSQ…GVKELAEANI (265 aa)) folds into the CoA carboxyltransferase N-terminal domain. Positions 33, 36, 52, and 55 each coordinate Zn(2+). A C4-type zinc finger spans residues 33–55 (CSECSQVAYRKDLISNFNVCSNC).

Belongs to the AccD/PCCB family. As to quaternary structure, acetyl-CoA carboxylase is a heterohexamer composed of biotin carboxyl carrier protein (AccB), biotin carboxylase (AccC) and two subunits each of ACCase subunit alpha (AccA) and ACCase subunit beta (AccD). Zn(2+) is required as a cofactor.

It localises to the cytoplasm. The catalysed reaction is N(6)-carboxybiotinyl-L-lysyl-[protein] + acetyl-CoA = N(6)-biotinyl-L-lysyl-[protein] + malonyl-CoA. The protein operates within lipid metabolism; malonyl-CoA biosynthesis; malonyl-CoA from acetyl-CoA: step 1/1. Its function is as follows. Component of the acetyl coenzyme A carboxylase (ACC) complex. Biotin carboxylase (BC) catalyzes the carboxylation of biotin on its carrier protein (BCCP) and then the CO(2) group is transferred by the transcarboxylase to acetyl-CoA to form malonyl-CoA. The sequence is that of Acetyl-coenzyme A carboxylase carboxyl transferase subunit beta from Prochlorococcus marinus (strain MIT 9312).